Consider the following 138-residue polypeptide: Large ribosomal subunit protein uL16 (138 aa).

The segment covering 1-15 has biased composition (basic residues); that stretch reads MLSPKKVKYRKKQRG. A disordered region spans residues 1 to 21; it reads MLSPKKVKYRKKQRGRLSGEA.

Belongs to the universal ribosomal protein uL16 family. Part of the 50S ribosomal subunit.

Functionally, binds 23S rRNA and is also seen to make contacts with the A and possibly P site tRNAs. This Borreliella afzelii (strain PKo) (Borrelia afzelii) protein is Large ribosomal subunit protein uL16.